A 460-amino-acid chain; its full sequence is Centrosomal protein CEP57L1 (460 aa).

Ser-49 carries the phosphoserine modification. Coiled coils occupy residues 51-228 (NSQA…EISK) and 317-384 (ISIC…LKKH). Residues 399–410 (KMSEASGIQQED) are compositionally biased toward polar residues. Positions 399 to 423 (KMSEASGIQQEDSYPKGSKNIKNSP) are disordered.

It belongs to the translokin family.

It is found in the cytoplasm. The protein localises to the cytoskeleton. It localises to the microtubule organizing center. Its subcellular location is the centrosome. Its function is as follows. Centrosomal protein which may be required for microtubule attachment to centrosomes. The sequence is that of Centrosomal protein CEP57L1 (CEP57L1) from Homo sapiens (Human).